We begin with the raw amino-acid sequence, 68 residues long: DNA gyrase inhibitor YacG (68 aa).

Residues Cys14, Cys17, Cys29, and Cys33 each coordinate Zn(2+).

It belongs to the DNA gyrase inhibitor YacG family. In terms of assembly, interacts with GyrB. It depends on Zn(2+) as a cofactor.

In terms of biological role, inhibits all the catalytic activities of DNA gyrase by preventing its interaction with DNA. Acts by binding directly to the C-terminal domain of GyrB, which probably disrupts DNA binding by the gyrase. The polypeptide is DNA gyrase inhibitor YacG (Azorhizobium caulinodans (strain ATCC 43989 / DSM 5975 / JCM 20966 / LMG 6465 / NBRC 14845 / NCIMB 13405 / ORS 571)).